The primary structure comprises 209 residues: Guanylate kinase (209 aa).

The region spanning 5–184 (GLLIVFSGPS…AAERVKRVIE (180 aa)) is the Guanylate kinase-like domain. 12-19 (GPSGVGKG) contacts ATP.

It belongs to the guanylate kinase family.

The protein localises to the cytoplasm. The catalysed reaction is GMP + ATP = GDP + ADP. Its function is as follows. Essential for recycling GMP and indirectly, cGMP. In Streptococcus thermophilus (strain CNRZ 1066), this protein is Guanylate kinase.